Consider the following 78-residue polypeptide: Translation initiation factor IF-1 (78 aa).

The 75-residue stretch at 4–78 (KFNNQAKQDK…LKLGRIIGRK (75 aa)) folds into the S1-like domain.

The protein belongs to the IF-1 family. Component of the 30S ribosomal translation pre-initiation complex which assembles on the 30S ribosome in the order IF-2 and IF-3, IF-1 and N-formylmethionyl-tRNA(fMet); mRNA recruitment can occur at any time during PIC assembly.

The protein resides in the cytoplasm. One of the essential components for the initiation of protein synthesis. Stabilizes the binding of IF-2 and IF-3 on the 30S subunit to which N-formylmethionyl-tRNA(fMet) subsequently binds. Helps modulate mRNA selection, yielding the 30S pre-initiation complex (PIC). Upon addition of the 50S ribosomal subunit IF-1, IF-2 and IF-3 are released leaving the mature 70S translation initiation complex. The polypeptide is Translation initiation factor IF-1 (Mycoplasma pneumoniae (strain ATCC 29342 / M129 / Subtype 1) (Mycoplasmoides pneumoniae)).